A 544-amino-acid chain; its full sequence is Methionine--tRNA ligase 2 (544 aa).

The 'HIGH' region motif lies at 10-20 (PYANGSLHLGH). The Zn(2+) site is built by cysteine 141, cysteine 144, cysteine 153, and cysteine 156. A 'KMSKS' region motif is present at residues 329-333 (KLSTS). Residue threonine 332 coordinates ATP.

It belongs to the class-I aminoacyl-tRNA synthetase family. MetG type 1 subfamily. Monomer. The cofactor is Zn(2+).

The protein resides in the cytoplasm. It carries out the reaction tRNA(Met) + L-methionine + ATP = L-methionyl-tRNA(Met) + AMP + diphosphate. Is required not only for elongation of protein synthesis but also for the initiation of all mRNA translation through initiator tRNA(fMet) aminoacylation. This Bacillus cereus (strain ATCC 14579 / DSM 31 / CCUG 7414 / JCM 2152 / NBRC 15305 / NCIMB 9373 / NCTC 2599 / NRRL B-3711) protein is Methionine--tRNA ligase 2.